The chain runs to 367 residues: Sigma54-dependent transcriptional regulator SfnR (367 aa).

Positions 21-250 (QVFEDPKSQA…LENVIHHTLL (230 aa)) constitute a Sigma-54 factor interaction domain. Residues 49–56 (GETGTGKE) and 112–121 (ADGGTLFLDE) each bind ATP.

Functionally, involved in the dimethyl sulfide degradation pathway. Activates the expression of sfnG and sfnF. The protein is Sigma54-dependent transcriptional regulator SfnR of Pseudomonas fluorescens (strain Pf0-1).